A 469-amino-acid chain; its full sequence is MTIHQSPEAFGYDAFLRQHQNKEVLRFITCGSVDDGKSTLIGRLLHDTKQIFDDQVTALQRDSRKHGTQGGEVDLALLVDGLQAEREQGITIDVAYRFFSTDRRSFIVADTPGHEQYTRNMATGASTADLAVILVDARHGLTRQSRRHALLVSLLGIRRVALAINKMDLVGWSQDKFEAIVSGFQAFAAPLNFTEVRAIPLSAKNGDNVVLPGTAATWYTDVPLLRYLEEVPVKSEERAAAFRMPVQWVNRPNSDFRGFSGLIASGSVAPGDAVTVAPSGKTSTIARIFTADGDLERASEGQSVTLVLADEVDASRGAVIATSDAPLTLTDSLDVRLFWAAESDLVPGANLWAKVGTQTVNAVVKAVHRRIDPETGQAGPADKLAVNDIGDVTLTLDRQIAVDPYAENRDTGSLILIDRETTDTAALGLVQRVVASSKVAPAPTASVTASAEPARSGGLLAGLKRLFGG.

The 216-residue stretch at 22-237 (KEVLRFITCG…LEEVPVKSEE (216 aa)) folds into the tr-type G domain. The G1 stretch occupies residues 31 to 38 (GSVDDGKS). Residue 31–38 (GSVDDGKS) coordinates GTP. The tract at residues 89 to 93 (GITID) is G2. Residues 110–113 (DTPG) form a G3 region. GTP contacts are provided by residues 110-114 (DTPGH) and 165-168 (NKMD). The segment at 165–168 (NKMD) is G4. Residues 202 to 204 (SAK) are G5.

It belongs to the TRAFAC class translation factor GTPase superfamily. Classic translation factor GTPase family. CysN/NodQ subfamily. Heterodimer composed of CysD, the smaller subunit, and CysN.

The enzyme catalyses sulfate + ATP + H(+) = adenosine 5'-phosphosulfate + diphosphate. It functions in the pathway sulfur metabolism; hydrogen sulfide biosynthesis; sulfite from sulfate: step 1/3. In terms of biological role, with CysD forms the ATP sulfurylase (ATPS) that catalyzes the adenylation of sulfate producing adenosine 5'-phosphosulfate (APS) and diphosphate, the first enzymatic step in sulfur assimilation pathway. APS synthesis involves the formation of a high-energy phosphoric-sulfuric acid anhydride bond driven by GTP hydrolysis by CysN coupled to ATP hydrolysis by CysD. This is Sulfate adenylyltransferase subunit 1 from Methylorubrum extorquens (strain PA1) (Methylobacterium extorquens).